The primary structure comprises 703 residues: Zinc finger CCCH domain-containing protein 36 (703 aa).

4 disordered regions span residues 1-42, 112-176, 204-242, and 442-481; these read MAGG…DPNG, LQLH…MKNK, VSGS…AGSS, and HGTL…SSSQ. A compositionally biased stretch (low complexity) spans 9-25; it reads GLPAAGEAAKAGRVGVG. Over residues 112–125 the composition is skewed to basic and acidic residues; that stretch reads LQLHGDEKYQKKAG. The segment covering 149 to 169 has biased composition (polar residues); it reads VSQSPPDSNALSSQRFGSSSP. The segment at 176–203 adopts a C3H1-type zinc-finger fold; the sequence is KTRKRTCTFYAQGRCKNGKSCTFLHEGE. The segment covering 451-468 has biased composition (basic and acidic residues); the sequence is TPDKDASHHKGADFDKGG. The span at 470–481 shows a compositional bias: low complexity; sequence SRSTLHVSSSSQ.

The sequence is that of Zinc finger CCCH domain-containing protein 36 from Oryza sativa subsp. japonica (Rice).